The sequence spans 678 residues: Glycine--tRNA ligase beta subunit (678 aa).

It belongs to the class-II aminoacyl-tRNA synthetase family. As to quaternary structure, tetramer of two alpha and two beta subunits.

The protein localises to the cytoplasm. It catalyses the reaction tRNA(Gly) + glycine + ATP = glycyl-tRNA(Gly) + AMP + diphosphate. This is Glycine--tRNA ligase beta subunit from Streptococcus pneumoniae (strain P1031).